Reading from the N-terminus, the 38-residue chain is Mating hormone A-factor 2 (38 aa).

The span at 1-12 (MQPITTASTQAT) shows a compositional bias: polar residues. Residues 1-20 (MQPITTASTQATQKDKSSEK) form a disordered region. Residues 1–23 (MQPITTASTQATQKDKSSEKKDN) constitute a propeptide that is removed on maturation. At cysteine 35 the chain carries Cysteine methyl ester. Cysteine 35 carries S-farnesyl cysteine lipidation. The propeptide at 36 to 38 (VIA) is removed in mature form.

Its subcellular location is the cell membrane. In terms of biological role, the active factor is excreted into the culture medium by haploid cells of the A mating type and acts on cells of the opposite mating type (type alpha). It mediates the conjugation process between the two types by inhibiting the initiation of DNA synthesis in type alpha cells and synchronizing them with type A. The chain is Mating hormone A-factor 2 (MFA2) from Saccharomyces cerevisiae (strain ATCC 204508 / S288c) (Baker's yeast).